The chain runs to 476 residues: UDP-N-acetylmuramate--L-alanine ligase (476 aa).

Gly121–Thr127 is an ATP binding site.

It belongs to the MurCDEF family.

It localises to the cytoplasm. It catalyses the reaction UDP-N-acetyl-alpha-D-muramate + L-alanine + ATP = UDP-N-acetyl-alpha-D-muramoyl-L-alanine + ADP + phosphate + H(+). Its pathway is cell wall biogenesis; peptidoglycan biosynthesis. Cell wall formation. This is UDP-N-acetylmuramate--L-alanine ligase from Clavibacter sepedonicus (Clavibacter michiganensis subsp. sepedonicus).